The sequence spans 273 residues: Dermonecrotic toxin SdSicTox-betaIIB1aiii (273 aa).

The active site involves His4. Mg(2+) is bound by residues Glu24 and Asp26. Residue His40 is the Nucleophile of the active site. Disulfide bonds link Cys44-Cys50 and Cys46-Cys189. Asp84 is a binding site for Mg(2+).

Belongs to the arthropod phospholipase D family. Class II subfamily. Mg(2+) is required as a cofactor. In terms of tissue distribution, expressed by the venom gland.

It localises to the secreted. The catalysed reaction is an N-(acyl)-sphingosylphosphocholine = an N-(acyl)-sphingosyl-1,3-cyclic phosphate + choline. It carries out the reaction an N-(acyl)-sphingosylphosphoethanolamine = an N-(acyl)-sphingosyl-1,3-cyclic phosphate + ethanolamine. The enzyme catalyses a 1-acyl-sn-glycero-3-phosphocholine = a 1-acyl-sn-glycero-2,3-cyclic phosphate + choline. It catalyses the reaction a 1-acyl-sn-glycero-3-phosphoethanolamine = a 1-acyl-sn-glycero-2,3-cyclic phosphate + ethanolamine. In terms of biological role, dermonecrotic toxins cleave the phosphodiester linkage between the phosphate and headgroup of certain phospholipids (sphingolipid and lysolipid substrates), forming an alcohol (often choline) and a cyclic phosphate. This toxin acts on sphingomyelin (SM). It may also act on ceramide phosphoethanolamine (CPE), lysophosphatidylcholine (LPC) and lysophosphatidylethanolamine (LPE), but not on lysophosphatidylserine (LPS), and lysophosphatidylglycerol (LPG). It acts by transphosphatidylation, releasing exclusively cyclic phosphate products as second products. Induces dermonecrosis, hemolysis, increased vascular permeability, edema, inflammatory response, and platelet aggregation. This Sicarius cf. damarensis (strain GJB-2008) (Six-eyed sand spider) protein is Dermonecrotic toxin SdSicTox-betaIIB1aiii.